A 342-amino-acid polypeptide reads, in one-letter code: Surface presentation of antigens protein SpaS (342 aa).

6 helical membrane passes run 28-48 (LTTV…FSLS), 70-90 (FFAV…FCVL), 133-153 (EFFK…FFWI), 158-178 (IIFS…GRLF), 181-201 (IILF…VIEF), and 260-280 (HIAI…ISLI).

Belongs to the type III secretion exporter family.

The protein resides in the cell inner membrane. Required for surface presentation of invasion plasmid antigens. Could play a role in preserving the translocation competence of the ipa antigens. Required for invasion and for secretion of the three ipa proteins. The protein is Surface presentation of antigens protein SpaS (spaS) of Shigella flexneri.